We begin with the raw amino-acid sequence, 301 residues long: Vomeronasal type-1 receptor 4 (301 aa).

The Extracellular portion of the chain corresponds to 1-15; it reads MASRYVAVGMMLSQT. A helical transmembrane segment spans residues 16–36; sequence VVGVLGSFSLLLHYLSLHYIG. Residues 37 to 48 lie on the Cytoplasmic side of the membrane; it reads CRLRSADLIVKH. A helical transmembrane segment spans residues 49–69; sequence LIAASFLTLLCKGVPQTMAAF. The Extracellular segment spans residues 70-88; the sequence is RVRYFLNAIGCKLVFYLHR. The chain crosses the membrane as a helical span at residues 89–107; that stretch reads VGRGVSTGTTCLLSVFQVI. The Cytoplasmic portion of the chain corresponds to 108–126; sequence TVSSRKSRWAKLKEKAPKH. A helical transmembrane segment spans residues 127–147; sequence VGFSVLLCWILCMLVNIIFPI. Over 148-185 the chain is Extracellular; the sequence is YVTGKRNHTNITVNKDLGDCCGRGNNKIAQTLRAMLLS. 2 N-linked (GlcNAc...) asparagine glycosylation sites follow: N154 and N157. Residues 186–206 traverse the membrane as a helical segment; the sequence is FPDVLCLGFMLWASSSMVCIL. Topologically, residues 207–234 are cytoplasmic; sequence HRHKQRVQHIHRSNLSPRASPENRATQS. The chain crosses the membrane as a helical span at residues 235–255; that stretch reads ILIPVSTFVSSYTLSCLLQVC. The Extracellular portion of the chain corresponds to 256–264; it reads MALLDNPNS. A helical membrane pass occupies residues 265 to 285; it reads LLVNTSALMSACFPTLSPFVL. Residues 286–301 lie on the Cytoplasmic side of the membrane; that stretch reads MSCDPSVYRLCFAWKR.

It belongs to the G-protein coupled receptor 1 family.

The protein localises to the cell membrane. Putative pheromone receptor. The protein is Vomeronasal type-1 receptor 4 (VN1R4) of Pongo pygmaeus (Bornean orangutan).